Here is a 354-residue protein sequence, read N- to C-terminus: (R,R)-butanediol dehydrogenase (354 aa).

In terms of domain architecture, Enoyl reductase (ER) spans 10–350 (GDIRIEDIPE…NNESAVKIIV (341 aa)). 3 residues coordinate Zn(2+): Cys-37, His-71, and Glu-157.

Belongs to the zinc-containing alcohol dehydrogenase family. It depends on Zn(2+) as a cofactor.

It carries out the reaction (R,R)-butane-2,3-diol + NAD(+) = (R)-acetoin + NADH + H(+). The catalysed reaction is (S)-acetoin + NAD(+) = diacetyl + NADH + H(+). Functionally, NAD-dependent butanediol dehydrogenase which catalyzes the oxidation of (R,R)-butane-2,3-diol to (3R)-acetoin and of meso-butane-2,3-diol to (3S)-acetoin. Preferentially oxidizes (R,R)-butane-2,3-diol, with a catalytic efficiency approximately fourfold higher than with meso-butane-2,3-diol. Shows a very low activity with (S,S)-butane-2,3-diol. Can also catalyze the reduction of (3R/3S)-acetoin and diacetyl in the presence of NADH. This Neisseria gonorrhoeae (strain ATCC 700825 / FA 1090) protein is (R,R)-butanediol dehydrogenase.